We begin with the raw amino-acid sequence, 454 residues long: LETM1 domain-containing protein YLH47, mitochondrial (454 aa).

The transit peptide at 1-45 (MLKYRSLPIKRAIHHPAPGITPISPRIMVSRLRVIPSFNLKFNRW) directs the protein to the mitochondrion. The Mitochondrial intermembrane portion of the chain corresponds to 46–136 (NSSVPESSKK…LKRTTQDIVR (91 aa)). Positions 51–73 (ESSKKELKTTDGNQESASKVSPV) are disordered. The helical transmembrane segment at 137-157 (LVPFAAFLIIPFAELLLPFAL) threads the bilayer. Residues 158-454 (KLFPNLLPST…IGEAAAIKEK (297 aa)) are Mitochondrial matrix-facing. The region spanning 177-371 (KLENLRNTRK…LCDVLIGIPD (195 aa)) is the Letm1 RBD domain. Residues 376–423 (EVKVNVVKEDEASAKQKLKQLREQEEIMKEEEQQEENAIVSVKDELSL) are a coiled coil. 2 stretches are compositionally biased toward basic and acidic residues: residues 420–430 (ELSLDDQDKNI) and 437–454 (VKPHDTKPIGEAAAIKEK). The interval 420-454 (ELSLDDQDKNIDAAAPDVKPHDTKPIGEAAAIKEK) is disordered.

As to quaternary structure, associates with the mitochondrial ribosomes.

Its subcellular location is the mitochondrion inner membrane. Its function is as follows. Involved in mitochondrial potassium homeostasis through the mitochondrial K(+)/H(+) exchange regulation. This Saccharomyces cerevisiae (strain ATCC 204508 / S288c) (Baker's yeast) protein is LETM1 domain-containing protein YLH47, mitochondrial (YLH47).